We begin with the raw amino-acid sequence, 473 residues long: Nitrogenase vanadium-iron protein alpha chain (473 aa).

[8Fe-7S] cluster contacts are provided by Cys49, Cys74, and Cys137. Residues Cys256 and His422 each coordinate [7Fe-V-9S-C-homocitryl] cluster.

It belongs to the NifD/NifK/NifE/NifN family. In terms of assembly, hexamer of two alpha, two beta, and two delta chains. Requires [8Fe-7S] cluster as cofactor. [7Fe-V-9S-C-homocitryl] cluster is required as a cofactor.

The enzyme catalyses N2 + 8 reduced [2Fe-2S]-[ferredoxin] + 16 ATP + 16 H2O = H2 + 8 oxidized [2Fe-2S]-[ferredoxin] + 2 NH4(+) + 16 ADP + 16 phosphate + 6 H(+). Functionally, this vanadium-iron protein is part of the nitrogenase complex that catalyzes the key enzymatic reactions in nitrogen fixation. This is Nitrogenase vanadium-iron protein alpha chain (vnfD) from Azotobacter chroococcum mcd 1.